The sequence spans 469 residues: Aspartyl/glutamyl-tRNA(Asn/Gln) amidotransferase subunit B (469 aa).

It belongs to the GatB/GatE family. GatB subfamily. Heterotrimer of A, B and C subunits.

The enzyme catalyses L-glutamyl-tRNA(Gln) + L-glutamine + ATP + H2O = L-glutaminyl-tRNA(Gln) + L-glutamate + ADP + phosphate + H(+). The catalysed reaction is L-aspartyl-tRNA(Asn) + L-glutamine + ATP + H2O = L-asparaginyl-tRNA(Asn) + L-glutamate + ADP + phosphate + 2 H(+). Its function is as follows. Allows the formation of correctly charged Asn-tRNA(Asn) or Gln-tRNA(Gln) through the transamidation of misacylated Asp-tRNA(Asn) or Glu-tRNA(Gln) in organisms which lack either or both of asparaginyl-tRNA or glutaminyl-tRNA synthetases. The reaction takes place in the presence of glutamine and ATP through an activated phospho-Asp-tRNA(Asn) or phospho-Glu-tRNA(Gln). The chain is Aspartyl/glutamyl-tRNA(Asn/Gln) amidotransferase subunit B from Methanococcus maripaludis (strain C7 / ATCC BAA-1331).